We begin with the raw amino-acid sequence, 456 residues long: Histidine--tRNA ligase (456 aa).

It belongs to the class-II aminoacyl-tRNA synthetase family. Homodimer.

Its subcellular location is the cytoplasm. The catalysed reaction is tRNA(His) + L-histidine + ATP = L-histidyl-tRNA(His) + AMP + diphosphate + H(+). The chain is Histidine--tRNA ligase from Borreliella afzelii (strain PKo) (Borrelia afzelii).